Here is a 78-residue protein sequence, read N- to C-terminus: Acyl carrier protein (78 aa).

A Carrier domain is found at 1–76 (MSLEDDVKLI…DVITYIKTRQ (76 aa)). Ser36 bears the O-(pantetheine 4'-phosphoryl)serine mark.

It belongs to the acyl carrier protein (ACP) family. In terms of processing, 4'-phosphopantetheine is transferred from CoA to a specific serine of apo-ACP by AcpS. This modification is essential for activity because fatty acids are bound in thioester linkage to the sulfhydryl of the prosthetic group.

It is found in the cytoplasm. Its pathway is lipid metabolism; fatty acid biosynthesis. Its function is as follows. Carrier of the growing fatty acid chain in fatty acid biosynthesis. This chain is Acyl carrier protein, found in Chlamydia felis (strain Fe/C-56) (Chlamydophila felis).